Here is a 365-residue protein sequence, read N- to C-terminus: PHD finger protein 6 (365 aa).

At serine 2 the chain carries N-acetylserine. Short sequence motifs (nuclear localization signal) lie at residues 13 to 16 (RQRK) and 129 to 133 (RKHKK). The C2HC pre-PHD-type 1 zinc-finger motif lies at 14–52 (QRKCGFCKSNRDKECGQLLISENQKVAAHHKCMLFSSAL). Residues 14–132 (QRKCGFCKSN…IYMVYCRKHK (119 aa)) are extended PHD1 domain (ePHD1). The PHD-type 1 zinc-finger motif lies at 80-132 (LMCSLCHCPGATIGCDVKTCHRTYHYHCALHDKAQIREKPSQGIYMVYCRKHK). A phosphoserine mark is found at serine 138, serine 145, and serine 155. A disordered region spans residues 139–211 (EADLEESFNE…RSSPSDTRPK (73 aa)). The Nucleolar localization signal signature appears at 157–169 (KSKKKSRKGRPRK). Residues 157 to 171 (KSKKKSRKGRPRKTN) are compositionally biased toward basic residues. Residue lysine 173 forms a Glycyl lysine isopeptide (Lys-Gly) (interchain with G-Cter in SUMO2) linkage. Phosphoserine is present on residues serine 183 and serine 199. Residues 209 to 249 (RPKCGFCHVGEEENEARGKLHIFNAKKAAAHYKCMLFSSGT) form a C2HC pre-PHD-type 2 zinc finger. Positions 209–330 (RPKCGFCHVG…IYKLYCKNHS (122 aa)) are extended PHD2 domain (ePHD2). Lysine 227 participates in a covalent cross-link: Glycyl lysine isopeptide (Lys-Gly) (interchain with G-Cter in SUMO2). The PHD-type 2 zinc finger occupies 278–330 (MKCTLCSQPGATIGCEIKACVKTYHYHCGVQDKAKYIENMSRGIYKLYCKNHS). The segment at 330 to 365 (SGNDERDEEDEERESKSRGKVEIDQQQLTQQQLNGN) is disordered. Positions 342-352 (RESKSRGKVEI) are enriched in basic and acidic residues. Over residues 354–365 (QQQLTQQQLNGN) the composition is skewed to low complexity. At threonine 358 the chain carries Phosphothreonine.

In terms of assembly, interacts with UBTF. Interacts with the NuRD complex component RBBP4 (via the nucleolar localization motif), the interaction mediates transcriptional repression activity.

It is found in the nucleus. The protein resides in the nucleolus. It localises to the chromosome. The protein localises to the centromere. Its subcellular location is the kinetochore. Its function is as follows. Transcriptional regulator that associates with ribosomal RNA promoters and suppresses ribosomal RNA (rRNA) transcription. The protein is PHD finger protein 6 (PHF6) of Pongo abelii (Sumatran orangutan).